The following is a 1024-amino-acid chain: Myosin phosphatase Rho-interacting protein (1024 aa).

Positions 1 to 382 (MSAAKENPCR…DRRSTESSMT (382 aa)) are interaction with F-actin. Residues 43-150 (KPIYGGWLLL…WLEMLMVYPR (108 aa)) enclose the PH 1 domain. The segment at 152-262 (NKQNQKKKRK…GDRVDGGRKV (111 aa)) is disordered. The span at 179–190 (SSSGGSSGSSSS) shows a compositional bias: low complexity. A phosphoserine mark is found at Ser-193, Ser-219, Ser-221, Ser-225, and Ser-227. Positions 221 to 233 (SPAQSPSQSQPPA) are enriched in low complexity. The span at 240–262 (PGLESKEDESTISGDRVDGGRKV) shows a compositional bias: basic and acidic residues. Phosphoserine occurs at positions 266, 270, 289, and 292. Disordered regions lie at residues 274-301 (AKQD…SRRS) and 328-379 (PSSD…STES). Phosphothreonine is present on Thr-295. Over residues 333 to 349 (RQGRSERRAIPRKRDFA) the composition is skewed to basic and acidic residues. Phosphoserine is present on Ser-364. The 97-residue stretch at 386 to 482 (LNFKKGWLTK…WIQTIMKHVL (97 aa)) folds into the PH 2 domain. Positions 486 to 583 (APDVTSSLPE…AEPGELERER (98 aa)) are disordered. Positions 488 to 508 (DVTSSLPEGKNKSTSFETCSR) are enriched in polar residues. Ser-492 bears the Phosphoserine mark. The span at 522–545 (PEQKKSRARERRREGRSKTFDWAE) shows a compositional bias: basic and acidic residues. Residues 545–823 (EFRPIQQALA…SVQRELEVLS (279 aa)) are interaction with RHOA. Ser-617 is modified (phosphoserine). At Thr-645 the chain carries Phosphothreonine. Positions 672 to 976 (HELTSLLEKE…AATEALGEKS (305 aa)) form a coiled coil. At Ser-799 the chain carries Phosphoserine. Residues 823–878 (SEQYSQKCLENAHLAQALEAERQALRQCQRENQELNAHNQELNNRLAAEITRLRTL) form an interaction with PPP1R12A region. The interval 972–995 (LGEKSPEGTTVSGYDIMKSKSNPD) is disordered. Ser-976, Gly-979, Ser-992, Ser-1013, and Ser-1015 each carry phosphoserine.

In terms of assembly, binds RHOA, PPP1R12A/MBS and PPP1R12C/MBS85 through adjacent coiled coil domains. Interacts with MYZAP. Binds F-actin through its N-terminus. Expressed in Kidney, Brain, Heart and Lung.

The protein localises to the cytoplasm. Its subcellular location is the cytoskeleton. Targets myosin phosphatase to the actin cytoskeleton. Required for the regulation of the actin cytoskeleton by RhoA and ROCK1. Depletion leads to an increased number of stress fibers in smooth muscle cells through stabilization of actin fibers by phosphorylated myosin. Overexpression of MRIP as well as its F-actin-binding region leads to disassembly of stress fibers in neuronal cells. The sequence is that of Myosin phosphatase Rho-interacting protein (Mprip) from Mus musculus (Mouse).